Here is a 409-residue protein sequence, read N- to C-terminus: Toluene 1,2-dioxygenase system ferredoxin--NAD(+) reductase component (409 aa).

4–35 (HVAIIGNGVGGFTTAQALRAEGFEGRISLIGD) serves as a coordination point for FAD. Residue 145 to 173 (RLLIVGGGLIGCEVATTARKLGLSVTILE) coordinates NAD(+).

Belongs to the bacterial ring-hydroxylating dioxygenase ferredoxin reductase family. This dioxygenase system consists of four proteins: the two subunits of the hydroxylase component (todC1 and todC2), a ferredoxin (TodB) and a ferredoxin reductase (TodA). It depends on FAD as a cofactor.

The catalysed reaction is 2 reduced [2Fe-2S]-[ferredoxin] + NAD(+) + H(+) = 2 oxidized [2Fe-2S]-[ferredoxin] + NADH. It participates in xenobiotic degradation; toluene degradation. In terms of biological role, part of the electron transfer component of toluene 1,2-dioxygenase, transfers electrons from ferredoxin (TodB) to NADH. This Pseudomonas putida (Arthrobacter siderocapsulatus) protein is Toluene 1,2-dioxygenase system ferredoxin--NAD(+) reductase component (todA).